A 378-amino-acid polypeptide reads, in one-letter code: Zinc transporter 7 (378 aa).

Residues 1 to 37 (MLPLSIKDDEYKPPKFNLFGKISGWFRSILSDKTSRN) are Cytoplasmic-facing. The helical transmembrane segment at 38 to 58 (LFFFLCLNLSFAFVELLYGIW) threads the bilayer. Topologically, residues 59–67 (SNCLGLISD) are lumenal. Residues 68–88 (SFHMFFDSTAILAGLAASVIS) traverse the membrane as a helical segment. Residues 89–102 (KWRDNDAFSYGYVR) lie on the Cytoplasmic side of the membrane. Residues 103 to 123 (AEVLAGFVNGLFLIFTAFFIF) form a helical membrane-spanning segment. The Lumenal segment spans residues 124-140 (SEGVERALAPPDVHHER). Residues 141–161 (LLLVSILGFVVNLVGIFVFNH) form a helical membrane-spanning segment. Residues 161-220 (HGGHGHSHGSGHGHSHSLFNGALDHSHGHEDHCHSHEAKHGAAHSHDHDHAHGHGHLHSH) form a his-rich loop region. Over 162–238 (GGHGHSHGSG…AGPSRQILQG (77 aa)) the chain is Cytoplasmic. Over residues 186 to 223 (SHGHEDHCHSHEAKHGAAHSHDHDHAHGHGHLHSHDGP) the composition is skewed to basic and acidic residues. The interval 186–224 (SHGHEDHCHSHEAKHGAAHSHDHDHAHGHGHLHSHDGPS) is disordered. The chain crosses the membrane as a helical span at residues 239–259 (VFLHILADTLGSIGVIASAIM). Residues 260–264 (MQNFG) lie on the Lumenal side of the membrane. The helical transmembrane segment at 265 to 285 (LMIADPICSILIAILIVVSVI) threads the bilayer. Residues 286 to 378 (PLLRESVGIL…LYVQIDFAAM (93 aa)) lie on the Cytoplasmic side of the membrane.

This sequence belongs to the cation diffusion facilitator (CDF) transporter (TC 2.A.4) family. SLC30A subfamily. In terms of assembly, homooligomer. As to expression, highly expressed in liver, spleen, duodenum and part of the jejunum of small intestine (at protein level). Moderately expressed in kidney, lung, and brain. Barely detectable in heart. In brain, expressed in cerebellum, cerebral cortex and hippocampus (at protein level).

It localises to the golgi apparatus membrane. Its subcellular location is the cytoplasmic vesicle. It is found in the golgi apparatus. The protein localises to the trans-Golgi network. The protein resides in the sarcoplasmic reticulum. It localises to the mitochondrion. The enzyme catalyses Zn(2+)(in) = Zn(2+)(out). Zinc ion transporter mediating zinc entry from the cytosol into the lumen of organelles along the secretory pathway. By contributing to zinc ion homeostasis within the early secretory pathway, regulates the activation and folding of enzymes like alkaline phosphatases. In Mus musculus (Mouse), this protein is Zinc transporter 7.